The primary structure comprises 230 residues: Cytochrome b6-f complex iron-sulfur subunit, chloroplastic (230 aa).

The transit peptide at 1–50 (MSSTTLSPTTPSQLCSGKSGISCPSIALLVKPTRTQMTGRGNKGMKITCQ) directs the protein to the chloroplast. The chain crosses the membrane as a helical span at residues 72-92 (LLGALSLPTAGMLVPYGSFLV). A Rieske domain is found at 115–213 (ATEWLKTHAP…VGVEDGKVVF (99 aa)). [2Fe-2S] cluster is bound by residues Cys157, His159, Cys175, and His178. The cysteines at positions 162 and 177 are disulfide-linked.

It belongs to the Rieske iron-sulfur protein family. In terms of assembly, the 4 large subunits of the cytochrome b6-f complex are cytochrome b6, subunit IV (17 kDa polypeptide, petD), cytochrome f and the Rieske protein, while the 4 small subunits are petG, petL, petM and petN. The complex functions as a dimer. It depends on [2Fe-2S] cluster as a cofactor.

The protein resides in the plastid. The protein localises to the chloroplast thylakoid membrane. It catalyses the reaction 2 oxidized [plastocyanin] + a plastoquinol + 2 H(+)(in) = 2 reduced [plastocyanin] + a plastoquinone + 4 H(+)(out). Component of the cytochrome b6-f complex, which mediates electron transfer between photosystem II (PSII) and photosystem I (PSI), cyclic electron flow around PSI, and state transitions. This chain is Cytochrome b6-f complex iron-sulfur subunit, chloroplastic (petC), found in Pisum sativum (Garden pea).